Consider the following 520-residue polypeptide: Laccase (520 aa).

The first 21 residues, Met-1–Ala-21, serve as a signal peptide directing secretion. Plastocyanin-like domains lie at Ile-23–Tyr-148 and Val-160–Tyr-302. 2 N-linked (GlcNAc...) asparagine glycosylation sites follow: Asn-72 and Asn-75. Cu cation-binding residues include His-85, His-87, His-130, and His-132. 2 disulfide bridges follow: Cys-106-Cys-509 and Cys-138-Cys-226. Residues Asn-210, Asn-229, and Asn-354 are each glycosylated (N-linked (GlcNAc...) asparagine). The Plastocyanin-like 3 domain occupies Thr-369–Asp-491. Residues His-416, His-419, His-421, His-473, Cys-474, His-475, and His-479 each contribute to the Cu cation site.

Belongs to the multicopper oxidase family. Requires Cu cation as cofactor.

The protein resides in the secreted. The catalysed reaction is 4 hydroquinone + O2 = 4 benzosemiquinone + 2 H2O. Its function is as follows. Lignin degradation and detoxification of lignin-derived products. Has activity towards guaiacol. The chain is Laccase from Trametes hirsuta (White-rot fungus).